The following is a 482-amino-acid chain: [Fructose-bisphosphate aldolase]-lysine N-methyltransferase, chloroplastic (482 aa).

The N-terminal 57 residues, 1 to 57 (MSASVAVVSGFLRIPSIQKSQNPSFLFSRPKKSLVRPISASSSELPENVRNFWKWLR), are a transit peptide targeting the chloroplast. The SET domain maps to 59–282 (QGVVSGKSVA…AGEQVYIQYD (224 aa)). S-adenosyl-L-methionine is bound by residues 75 to 77 (EGL) and arginine 217. Substrate contacts are provided by arginine 217, arginine 221, and aspartate 234. Position 237–238 (237–238 (NH)) interacts with S-adenosyl-L-methionine. Tyrosine 249, tyrosine 281, and tyrosine 294 together coordinate substrate.

Belongs to the class V-like SAM-binding methyltransferase superfamily. Plant protein-lysine LSMT methyltransferase family.

The protein resides in the plastid. It is found in the chloroplast stroma. It carries out the reaction [fructose-bisphosphate aldolase]-L-lysine + 3 S-adenosyl-L-methionine = [fructose-bisphosphate aldolase]-N(6),N(6),N(6)-trimethyl-L-lysine + 3 S-adenosyl-L-homocysteine + 3 H(+). Its function is as follows. Protein-lysine methyltransferase methylating chloroplastic fructose 1,6-bisphosphate aldolases. Can also use with low efficiency gamma-tocopherol methyltransferase as substrate, but not a cytosolic aldolase. Able to interact with unmethylated Rubisco, but unlike in pea, the complex is catalytically unproductive. This is [Fructose-bisphosphate aldolase]-lysine N-methyltransferase, chloroplastic (LSMT-L) from Arabidopsis thaliana (Mouse-ear cress).